A 122-amino-acid polypeptide reads, in one-letter code: uncharacterized protein (122 aa).

This is an uncharacterized protein from Rickettsia conorii (strain ATCC VR-613 / Malish 7).